The primary structure comprises 387 residues: MANNDFLFTSESVSEGHPDKVADQISDAILDAIFTQDPNARVAAETLCNTGLVVLAGEITTTANVDYIQVARDTIRHIGYDNTEYGIDYKGCAVLVAYDKQSPDIAQGVDRSSEDYLNQGAGDQGLMFGYACDETPDLMPAPIWYAHRLVQRQSELRKDGRLPWLRPDAKSQVTFRYVDGRPAEVDTVVLSTQHSPEISQASIREAVIEDIIKPSFPEGLITPKTKFLVNPTGRFVIGGPQGDCGLTGRKIIVDTYGGACPHGGGAFSGKDPSKVDRSAAYAARYVAKNVVAAGLARQCQVQVSYAIGVAEPINITVYTEGTGVIPDEQIAKLVREHFDLRPKGIVNMLDLLRPIYTKTAAYGHFGRSEPEFSWEATDKAAALKQGA.

Residue His-17 participates in ATP binding. Asp-19 contacts Mg(2+). Glu-45 contributes to the K(+) binding site. L-methionine-binding residues include Glu-58 and Gln-101. Positions Gln-101 to Arg-111 are flexible loop. ATP-binding positions include Asp-168 to Lys-170, Arg-234 to Phe-235, Asp-243, Arg-249 to Lys-250, Ala-266, and Lys-270. Asp-243 serves as a coordination point for L-methionine. Lys-274 serves as a coordination point for L-methionine.

The protein belongs to the AdoMet synthase family. In terms of assembly, homotetramer; dimer of dimers. Mg(2+) is required as a cofactor. It depends on K(+) as a cofactor.

The protein resides in the cytoplasm. It catalyses the reaction L-methionine + ATP + H2O = S-adenosyl-L-methionine + phosphate + diphosphate. It functions in the pathway amino-acid biosynthesis; S-adenosyl-L-methionine biosynthesis; S-adenosyl-L-methionine from L-methionine: step 1/1. Functionally, catalyzes the formation of S-adenosylmethionine (AdoMet) from methionine and ATP. The overall synthetic reaction is composed of two sequential steps, AdoMet formation and the subsequent tripolyphosphate hydrolysis which occurs prior to release of AdoMet from the enzyme. This is S-adenosylmethionine synthase from Bordetella bronchiseptica (strain ATCC BAA-588 / NCTC 13252 / RB50) (Alcaligenes bronchisepticus).